The chain runs to 24 residues: Xenoposin-precursor fragment B1 (24 aa).

Expressed by the skin glands.

The protein resides in the secreted. Functionally, has antibacterial activity. This is Xenoposin-precursor fragment B1 from Xenopus borealis (Kenyan clawed frog).